Consider the following 335-residue polypeptide: MMLNATEFLTPNAINVDAVDETNAKVTLEPLERGFGHTLGNALRRILLSSLPGAAVIEAEIEGVDHEYSTLEGLQEDVLDLLLNLKGLAITMHDQNEVFLTLDKKGPGIITAADIELPHNVDIVNPELVLGTLGDRGHLKMRLRVVMGRGYEPANLRREDGDTKAIGRLKLDASFSPVSRVAYQVENARVEQRTDLDRLIIELETNGTIDPEEAIRKAATILQQQISIFVDLEAEEAPEPVKEKEEVDPVLLRPVDDLELTVRSANCLKAENIYYIGDLVQRSETELLKTPNLGKKSLTEIKDVLASKGLELDMRLENWPPADLRVDDRFSYRSR.

Positions 1-233 (MMLNATEFLT…QQISIFVDLE (233 aa)) are alpha N-terminal domain (alpha-NTD). The alpha C-terminal domain (alpha-CTD) stretch occupies residues 247–335 (VDPVLLRPVD…VDDRFSYRSR (89 aa)).

This sequence belongs to the RNA polymerase alpha chain family. In terms of assembly, homodimer. The RNAP catalytic core consists of 2 alpha, 1 beta, 1 beta' and 1 omega subunit. When a sigma factor is associated with the core the holoenzyme is formed, which can initiate transcription.

The enzyme catalyses RNA(n) + a ribonucleoside 5'-triphosphate = RNA(n+1) + diphosphate. Its function is as follows. DNA-dependent RNA polymerase catalyzes the transcription of DNA into RNA using the four ribonucleoside triphosphates as substrates. The polypeptide is DNA-directed RNA polymerase subunit alpha (Psychrobacter sp. (strain PRwf-1)).